The primary structure comprises 301 residues: Tetrapeptide repeat homeobox protein 2 (301 aa).

Disordered stretches follow at residues 1-27 and 273-301; these read MQDP…RTVY and SLST…LLDL. Composition is skewed to basic and acidic residues over residues 16-26 and 281-292; these read PPRRQRQERTV and YKEEDGFVDKNH. Positions 20 to 79 form a DNA-binding region, homeobox; it reads QRQERTVYTESQQKVLEFYFQKDQYPNYDQRLNLAEMLSLREQQLQVWFKNRRAKLARER.

This sequence belongs to the paired homeobox family.

The protein localises to the nucleus. Its function is as follows. Transcription factor expressed after fertilization required for zygotic genome activation (ZGA), a critical event in early embryonic development during which the developmental control passes from maternally provided mRNAs to the expression of the zygotic genome after fertilization. Binds and activates expression of key ZGA marker genes, such as NANOGNB, ZSCAN4, DUXB, KLF5 and DPPA3. Binds to regulatory DNA sequences containing a 5'-TAATCC-3' sequence motif. This Homo sapiens (Human) protein is Tetrapeptide repeat homeobox protein 2.